The following is a 184-amino-acid chain: ATP synthase subunit b, chloroplastic (184 aa).

A helical membrane pass occupies residues 27–49 (LATNLINLSVVFGVLIFFGKGVL).

It belongs to the ATPase B chain family. F-type ATPases have 2 components, F(1) - the catalytic core - and F(0) - the membrane proton channel. F(1) has five subunits: alpha(3), beta(3), gamma(1), delta(1), epsilon(1). F(0) has four main subunits: a(1), b(1), b'(1) and c(10-14). The alpha and beta chains form an alternating ring which encloses part of the gamma chain. F(1) is attached to F(0) by a central stalk formed by the gamma and epsilon chains, while a peripheral stalk is formed by the delta, b and b' chains.

It is found in the plastid. The protein localises to the chloroplast thylakoid membrane. Functionally, f(1)F(0) ATP synthase produces ATP from ADP in the presence of a proton or sodium gradient. F-type ATPases consist of two structural domains, F(1) containing the extramembraneous catalytic core and F(0) containing the membrane proton channel, linked together by a central stalk and a peripheral stalk. During catalysis, ATP synthesis in the catalytic domain of F(1) is coupled via a rotary mechanism of the central stalk subunits to proton translocation. Its function is as follows. Component of the F(0) channel, it forms part of the peripheral stalk, linking F(1) to F(0). The polypeptide is ATP synthase subunit b, chloroplastic (Aethionema cordifolium (Lebanon stonecress)).